The chain runs to 229 residues: Transmembrane emp24 domain-containing protein 5 (229 aa).

The signal sequence occupies residues 1–27 (MGDKIWLPFPVLLLAALPPVLLPGAAG). Over 28–196 (FTPSLDSDFT…IQESNFDRVN (169 aa)) the chain is Lumenal. Positions 45 to 126 (KECFYQPMPL…EKVIFFELIL (82 aa)) constitute a GOLD domain. A helical membrane pass occupies residues 197 to 217 (FWSMVNLVVMVVVSAIQVYML). Residues 218–229 (KSLFEDKRKSRT) are Cytoplasmic-facing.

It belongs to the EMP24/GP25L family. In terms of assembly, interacts with TMED9 and TMED10.

It localises to the endoplasmic reticulum membrane. It is found in the golgi apparatus. Its subcellular location is the cis-Golgi network membrane. The protein resides in the endoplasmic reticulum-Golgi intermediate compartment membrane. Functionally, potential role in vesicular protein trafficking, mainly in the early secretory pathway. Required for the maintenance of the Golgi apparatus; involved in protein exchange between Golgi stacks during assembly. Probably not required for COPI-vesicle-mediated retrograde transport. This is Transmembrane emp24 domain-containing protein 5 (TMED5) from Homo sapiens (Human).